The primary structure comprises 292 residues: Glutamate racemase (292 aa).

Residues 28–29 (DS) and 60–61 (YG) contribute to the substrate site. Residue Cys-91 is the Proton donor/acceptor of the active site. Position 92-93 (92-93 (NT)) interacts with substrate. Residue Cys-200 is the Proton donor/acceptor of the active site. 201–202 (TH) lines the substrate pocket.

Belongs to the aspartate/glutamate racemases family.

It catalyses the reaction L-glutamate = D-glutamate. Its pathway is cell wall biogenesis; peptidoglycan biosynthesis. Its function is as follows. Provides the (R)-glutamate required for cell wall biosynthesis. The protein is Glutamate racemase of Nostoc sp. (strain PCC 7120 / SAG 25.82 / UTEX 2576).